The chain runs to 146 residues: Hemoglobin subunit beta (146 aa).

Residue Val-1 is modified to N-acetylvaline. The 145-residue stretch at Gln-2–His-146 folds into the Globin domain. Ser-44 carries the phosphoserine modification. Lys-59 is subject to N6-acetyllysine. His-63 lines the heme b pocket. Position 82 is an N6-acetyllysine (Lys-82). His-92 contributes to the heme b binding site. The residue at position 93 (Cys-93) is an S-nitrosocysteine. Lys-144 bears the N6-acetyllysine mark.

The protein belongs to the globin family. As to quaternary structure, heterotetramer of two alpha chains and two beta chains. Red blood cells.

Functionally, involved in oxygen transport from the lung to the various peripheral tissues. The protein is Hemoglobin subunit beta (HBB) of Equus caballus (Horse).